A 397-amino-acid polypeptide reads, in one-letter code: Digeranylgeranylglycerophospholipid reductase 1 (397 aa).

The FAD site is built by alanine 18, aspartate 37, cysteine 48, alanine 49, glycine 51, arginine 104, alanine 128, aspartate 284, glycine 296, and isoleucine 297.

The protein belongs to the geranylgeranyl reductase family. DGGGPL reductase subfamily. FAD is required as a cofactor.

It carries out the reaction a 2,3-bis-O-phytanyl-sn-glycerol 1-phospholipid + 8 A = a 2,3-bis-O-(geranylgeranyl)-sn-glycerol 1-phospholipid + 8 AH2. The catalysed reaction is 2,3-bis-O-(phytanyl)-sn-glycerol 1-phosphate + 8 A = 2,3-bis-O-(geranylgeranyl)-sn-glycerol 1-phosphate + 8 AH2. It catalyses the reaction CDP-2,3-bis-O-(geranylgeranyl)-sn-glycerol + 8 AH2 = CDP-2,3-bis-O-(phytanyl)-sn-glycerol + 8 A. The enzyme catalyses archaetidylserine + 8 AH2 = 2,3-bis-O-phytanyl-sn-glycero-3-phospho-L-serine + 8 A. It functions in the pathway membrane lipid metabolism; glycerophospholipid metabolism. In terms of biological role, is involved in the reduction of 2,3-digeranylgeranylglycerophospholipids (unsaturated archaeols) into 2,3-diphytanylglycerophospholipids (saturated archaeols) in the biosynthesis of archaeal membrane lipids. Catalyzes the formation of archaetidic acid (2,3-di-O-phytanyl-sn-glyceryl phosphate) from 2,3-di-O-geranylgeranylglyceryl phosphate (DGGGP) via the hydrogenation of each double bond of the isoprenoid chains. Is also probably able to reduce double bonds of geranyl groups in CDP-2,3-bis-O-(geranylgeranyl)-sn-glycerol and archaetidylserine, thus acting at various stages in the biosynthesis of archaeal membrane lipids. The chain is Digeranylgeranylglycerophospholipid reductase 1 from Methanothermobacter thermautotrophicus (strain ATCC 29096 / DSM 1053 / JCM 10044 / NBRC 100330 / Delta H) (Methanobacterium thermoautotrophicum).